A 95-amino-acid chain; its full sequence is MNVDEEIQKLEEEIHRLGSRQTDGSYKVTFGVLFNDDRCANIFEALVGTLRAAKKRKIVAFEGELLLQGVHDKVEITLRPTPPPPQAAAATAASS.

At M1 the chain carries N-acetylmethionine.

Belongs to the costars family.

This chain is Costars family protein At4g33640, found in Arabidopsis thaliana (Mouse-ear cress).